The following is a 177-amino-acid chain: Immunity protein CdiI-YPIII (177 aa).

Interacts with the C-terminal DNase fragment (residues 954-1077) of cognate toxin CdiA-YPIII.

Its function is as follows. Immunity protein component of a toxin-immunity protein module, which functions as a cellular contact-dependent growth inhibition (CDI) system. CDI modules allow bacteria to communicate with and inhibit the growth of closely related neighboring bacteria in a contact-dependent fashion. Neutralizes the toxic activity of cognate toxin CdiA-YPIII (residues 954-1077). Does not inhibit toxic activity of CdiA from other toxin-immunity modules. The chain is Immunity protein CdiI-YPIII from Yersinia pseudotuberculosis serotype O:3 (strain YPIII).